A 388-amino-acid polypeptide reads, in one-letter code: tRNA (guanine(26)-N(2))-dimethyltransferase (388 aa).

Residues 7 to 381 enclose the Trm1 methyltransferase domain; it reads KTVEEGLTKI…APLKKIKEII (375 aa). Residues Arg40, Arg70, Asp88, Asp115, and Ala116 each contribute to the S-adenosyl-L-methionine site. The Zn(2+) site is built by Cys248, Cys251, Cys268, and Cys271.

This sequence belongs to the class I-like SAM-binding methyltransferase superfamily. Trm1 family.

The catalysed reaction is guanosine(26) in tRNA + 2 S-adenosyl-L-methionine = N(2)-dimethylguanosine(26) in tRNA + 2 S-adenosyl-L-homocysteine + 2 H(+). Dimethylates a single guanine residue at position 26 of a number of tRNAs using S-adenosyl-L-methionine as donor of the methyl groups. The protein is tRNA (guanine(26)-N(2))-dimethyltransferase of Methanobrevibacter smithii (strain ATCC 35061 / DSM 861 / OCM 144 / PS).